We begin with the raw amino-acid sequence, 469 residues long: Zinc transporter SLC39A7 (469 aa).

Residues 10–30 traverse the membrane as a helical segment; sequence WVAVGLLTWATLGLLVAGLGG. 2 stretches are compositionally biased toward basic and acidic residues: residues 42–56 and 66–114; these read FHGHSHRHSHEDFHH and HTHE…EHSH. Residues 42–121 are disordered; that stretch reads FHGHSHRHSH…HSHGGYGESG (80 aa). H66 is modified (pros-methylhistidine). 3 helical membrane passes run 138-158, 169-189, and 214-234; these read ALGATVLISAAPFFVLFLIPV, LQILLSFASGGLLGDAFLHLI, and GPILSVGLWVLSGIVAFLVVE. The span at 242 to 263 shows a compositional bias: basic residues; it reads GGHGHSHGHGHAHSHTRGSHGH. A disordered region spans residues 242-310; sequence GGHGHSHGHG…VRPQNAEEEK (69 aa). The span at 264–285 shows a compositional bias: basic and acidic residues; that stretch reads GRQERSTKEKQSSEEEEKETRG. Phosphoserine; by CK2 is present on residues S275 and S276. 2 helical membrane passes run 381-401 and 417-436; these read MRLQLLTAVGALAGTACALLT and GWVLPFTAGGFIYVATVSVL.

It belongs to the ZIP transporter (TC 2.A.5) family. KE4/Catsup subfamily. Homodimer. Rapidly phosphorylated by CK2 following Zn(2+) treatment. This phosphorylation is required for efficient cytosolic Zn(2+) release. Post-translationally, methylation at some His residue by METTL9 leads to reduced zinc-binding. Widely expressed.

The protein localises to the endoplasmic reticulum membrane. It localises to the golgi apparatus. The protein resides in the cis-Golgi network membrane. It carries out the reaction Zn(2+)(in) = Zn(2+)(out). With respect to regulation, phosphorylation activates zinc transport activity. Functionally, transports Zn(2+) from the endoplasmic reticulum (ER)/Golgi apparatus to the cytosol, playing an essential role in the regulation of cytosolic zinc levels. Acts as a gatekeeper of zinc release from intracellular stores, requiring post-translational activation by phosphorylation, resulting in activation of multiple downstream pathways leading to cell growth and proliferation. Has an essential role in B cell development and is required for proper B cell receptor signaling. Plays an important role in maintaining intestinal epithelial homeostasis and skin dermis development by regulating ER function. Controls cell signaling pathways involved in glucose metabolism in skeletal muscle. Has a protective role against ER stress in different biological contexts. Mediates Zn(2+)-induced ferroptosis. This is Zinc transporter SLC39A7 (SLC39A7) from Homo sapiens (Human).